A 74-amino-acid chain; its full sequence is UPF0346 protein YozE (74 aa).

It belongs to the UPF0346 family.

This chain is UPF0346 protein YozE (yozE), found in Bacillus subtilis (strain 168).